The following is a 174-amino-acid chain: UPF0113 protein APE_0516.1 (174 aa).

This sequence belongs to the UPF0113 family.

This Aeropyrum pernix (strain ATCC 700893 / DSM 11879 / JCM 9820 / NBRC 100138 / K1) protein is UPF0113 protein APE_0516.1.